A 137-amino-acid polypeptide reads, in one-letter code: MISVDVPGHPGDAGGGGGGARKVADAVPDVAQRQKVLHGRDALAGEACAVVDALDRAKGEPVSGHSSVVWWINSQGYHGGRPGFEPRIRPSAVIHAVTARVSNPGVRRQTTGERSFWLPSRRGGCCASFFGHWPRAA.

Over residues 1–10 (MISVDVPGHP) the composition is skewed to low complexity. Positions 1-23 (MISVDVPGHPGDAGGGGGGARKV) are disordered. A compositionally biased stretch (gly residues) spans 11 to 20 (GDAGGGGGGA).

This is an uncharacterized protein from Human adenovirus C serotype 2 (HAdV-2).